Here is a 729-residue protein sequence, read N- to C-terminus: DNA topoisomerase 3 (729 aa).

Residues 3–136 (KSVVIAEKPS…IKRLWISSVT (134 aa)) enclose the Toprim domain. Mg(2+) is bound by residues glutamate 9 and aspartate 105. A Topo IA-type catalytic domain is found at 153 to 594 (YDNLYASAVA…EMKNYTKEIV (442 aa)). The interaction with DNA stretch occupies residues 187–192 (NCGRVQ). Tyrosine 310 (O-(5'-phospho-DNA)-tyrosine intermediate) is an active-site residue. Basic and acidic residues predominate over residues 686-713 (ERRKKESGNKADKRDVQKYMKQQKKEEE). A disordered region spans residues 686–718 (ERRKKESGNKADKRDVQKYMKQQKKEEEPLNNP).

The protein belongs to the type IA topoisomerase family. Mg(2+) serves as cofactor.

The enzyme catalyses ATP-independent breakage of single-stranded DNA, followed by passage and rejoining.. In terms of biological role, releases the supercoiling and torsional tension of DNA, which is introduced during the DNA replication and transcription, by transiently cleaving and rejoining one strand of the DNA duplex. Introduces a single-strand break via transesterification at a target site in duplex DNA. The scissile phosphodiester is attacked by the catalytic tyrosine of the enzyme, resulting in the formation of a DNA-(5'-phosphotyrosyl)-enzyme intermediate and the expulsion of a 3'-OH DNA strand. The free DNA strand then undergoes passage around the unbroken strand, thus removing DNA supercoils. Finally, in the religation step, the DNA 3'-OH attacks the covalent intermediate to expel the active-site tyrosine and restore the DNA phosphodiester backbone. The chain is DNA topoisomerase 3 from Bacillus cereus (strain ZK / E33L).